A 280-amino-acid polypeptide reads, in one-letter code: Energy-coupling factor transporter ATP-binding protein EcfA1 (280 aa).

Residues 6 to 244 (IECKNVVYKY…VPLMKNIGLD (239 aa)) form the ABC transporter domain. 43–50 (GHNGSGKS) serves as a coordination point for ATP.

It belongs to the ABC transporter superfamily. Energy-coupling factor EcfA family. As to quaternary structure, forms a stable energy-coupling factor (ECF) transporter complex composed of 2 membrane-embedded substrate-binding proteins (S component), 2 ATP-binding proteins (A component) and 2 transmembrane proteins (T component).

It localises to the cell membrane. In terms of biological role, ATP-binding (A) component of a common energy-coupling factor (ECF) ABC-transporter complex. Unlike classic ABC transporters this ECF transporter provides the energy necessary to transport a number of different substrates. The polypeptide is Energy-coupling factor transporter ATP-binding protein EcfA1 (Clostridium novyi (strain NT)).